The following is a 632-amino-acid chain: Myrcene synthase TPS3FN, chloroplastic (632 aa).

The N-terminal 55 residues, 1–55 (MHCMAVHQFSPSIVSSLPTISTYNNNHFCRFFTPKTSISPISKTKSKSSTCYPIQ), are a transit peptide targeting the chloroplast. (2E)-geranyl diphosphate-binding residues include Arg343, Asp380, Asp384, Arg524, and Asp527. Mg(2+) is bound by residues Asp380 and Asp384. A DDXXD motif motif is present at residues 380-384 (DDIYD). Mg(2+) contacts are provided by Asp527, Thr531, and Glu535.

It belongs to the terpene synthase family. Tpsb subfamily. It depends on Mg(2+) as a cofactor. Mn(2+) serves as cofactor. As to expression, expressed in glandular trichomes two to four weeks after flowering onset.

Its subcellular location is the plastid. The protein resides in the chloroplast. It catalyses the reaction (2E)-geranyl diphosphate = beta-myrcene + diphosphate. The protein operates within secondary metabolite biosynthesis; terpenoid biosynthesis. Its function is as follows. Involved in monoterpene (C10) olefins biosynthesis, constituants of cannabinoids and terpenoids-rich resins. Catalyzes strictly the conversion of (2E)-geranyl diphosphate to beta-myrcene. The sequence is that of Myrcene synthase TPS3FN, chloroplastic from Cannabis sativa (Hemp).